A 144-amino-acid polypeptide reads, in one-letter code: uncharacterized protein (144 aa).

This is an uncharacterized protein from Escherichia coli O157:H7.